The chain runs to 333 residues: 1D-myo-inositol 2-acetamido-2-deoxy-alpha-D-glucopyranoside deacetylase (333 aa).

The Zn(2+) site is built by His-18, Asp-21, and His-165.

Belongs to the MshB deacetylase family. Requires Zn(2+) as cofactor.

It carries out the reaction 1D-myo-inositol 2-acetamido-2-deoxy-alpha-D-glucopyranoside + H2O = 1D-myo-inositol 2-amino-2-deoxy-alpha-D-glucopyranoside + acetate. Functionally, catalyzes the deacetylation of 1D-myo-inositol 2-acetamido-2-deoxy-alpha-D-glucopyranoside (GlcNAc-Ins) in the mycothiol biosynthesis pathway. This Corynebacterium jeikeium (strain K411) protein is 1D-myo-inositol 2-acetamido-2-deoxy-alpha-D-glucopyranoside deacetylase.